Here is a 322-residue protein sequence, read N- to C-terminus: tRNA N6-adenosine threonylcarbamoyltransferase (322 aa).

Fe cation is bound by residues His109 and His113. Residues 131 to 135, Asp164, Gly177, Asp181, and Asn277 contribute to the substrate site; that span reads LISGG. Asp303 provides a ligand contact to Fe cation.

This sequence belongs to the KAE1 / TsaD family. Requires Fe(2+) as cofactor.

It localises to the cytoplasm. The enzyme catalyses L-threonylcarbamoyladenylate + adenosine(37) in tRNA = N(6)-L-threonylcarbamoyladenosine(37) in tRNA + AMP + H(+). Functionally, required for the formation of a threonylcarbamoyl group on adenosine at position 37 (t(6)A37) in tRNAs that read codons beginning with adenine. Is involved in the transfer of the threonylcarbamoyl moiety of threonylcarbamoyl-AMP (TC-AMP) to the N6 group of A37, together with TsaE and TsaB. TsaD likely plays a direct catalytic role in this reaction. The chain is tRNA N6-adenosine threonylcarbamoyltransferase from Mesomycoplasma hyopneumoniae (strain 232) (Mycoplasma hyopneumoniae).